The chain runs to 394 residues: Elongation factor Tu (394 aa).

One can recognise a tr-type G domain in the interval 10-204 (KPHVNIGTIG…AVDSWIPLPE (195 aa)). The tract at residues 19–26 (GHVDHGKT) is G1. 19 to 26 (GHVDHGKT) contacts GTP. Thr26 contributes to the Mg(2+) binding site. Residues 60–64 (GITIN) form a G2 region. The G3 stretch occupies residues 81–84 (DCPG). GTP is bound by residues 81–85 (DCPGH) and 136–139 (NKCD). Residues 136–139 (NKCD) are G4. The interval 174–176 (SGL) is G5.

The protein belongs to the TRAFAC class translation factor GTPase superfamily. Classic translation factor GTPase family. EF-Tu/EF-1A subfamily. In terms of assembly, monomer.

The protein localises to the cytoplasm. The enzyme catalyses GTP + H2O = GDP + phosphate + H(+). Functionally, GTP hydrolase that promotes the GTP-dependent binding of aminoacyl-tRNA to the A-site of ribosomes during protein biosynthesis. The chain is Elongation factor Tu from Ureaplasma urealyticum serovar 10 (strain ATCC 33699 / Western).